The following is a 64-amino-acid chain: MKNKFAALVITLFVLVLAIDNVTTQCLEGCECNQESTGKTCRPKQGSNVSPAVCLAQYCYHGYC.

Residues 1–18 (MKNKFAALVITLFVLVLA) form the signal peptide.

Belongs to the scolopendra neurotoxin 6 family. Contains 3 disulfide bonds. In terms of tissue distribution, expressed by the venom gland.

The protein localises to the secreted. The protein is Putative neurotoxin 5 of Scolopendra mutilans (Chinese red-headed centipede).